The primary structure comprises 489 residues: Inositol-pentakisphosphate 2-kinase (489 aa).

The EXKPK motif motif lies at 136-140 (EIKPK).

Belongs to the IPK1 type 2 family.

The protein resides in the cytoplasm. It localises to the nucleus. It carries out the reaction 1D-myo-inositol 1,3,4,5,6-pentakisphosphate + ATP = 1D-myo-inositol hexakisphosphate + ADP + H(+). Functionally, phosphorylates Ins(1,3,4,5,6)P5 at position 2 to form Ins(1,2,3,4,5,6)P6 (InsP6 or phytate). InsP6 is involved in many processes such as mRNA export, non-homologous end-joining, endocytosis, ion channel regulation. It also protects cells from TNF-alpha-induced apoptosis. The polypeptide is Inositol-pentakisphosphate 2-kinase (Ippk) (Rattus norvegicus (Rat)).